Here is a 65-residue protein sequence, read N- to C-terminus: Large ribosomal subunit protein bL33m (65 aa).

A mitochondrion-targeting transit peptide spans Met-1–Phe-8.

It belongs to the bacterial ribosomal protein bL33 family. As to quaternary structure, component of the mitochondrial ribosome large subunit (39S) which comprises a 16S rRNA and about 50 distinct proteins.

It is found in the mitochondrion. The polypeptide is Large ribosomal subunit protein bL33m (Mrpl33) (Mus musculus (Mouse)).